A 170-amino-acid polypeptide reads, in one-letter code: Transmembrane protein 252 (170 aa).

2 consecutive transmembrane segments (helical) span residues 8 to 28 (ILCA…AFFI) and 40 to 60 (LIAA…GIFW). Residues 112-147 (CPAEREASGIPPPLYTETGLEFQDGNDSHPEAPPSY) are disordered.

It localises to the membrane. This is Transmembrane protein 252 (TMEM252) from Pongo abelii (Sumatran orangutan).